The primary structure comprises 241 residues: Probable transcriptional regulator PhnF (241 aa).

In terms of domain architecture, HTH gntR-type spans 11 to 78 (PTRYQEIAAK…QGVGVLVLMR (68 aa)). The segment at residues 38–57 (EQQLAARFEVNRHTLRRAID) is a DNA-binding region (H-T-H motif).

Its function is as follows. Belongs to an operon involved in alkylphosphonate uptake and C-P lyase. Exact function not known. By similarity could be a transcriptional regulator. The protein is Probable transcriptional regulator PhnF (phnF) of Escherichia coli (strain K12).